The primary structure comprises 68 residues: Frenatin-3 (68 aa).

A signal peptide spans Met-1 to Cys-22. Positions Glu-23–Arg-46 are excised as a propeptide. Residues Lys-26–Gly-47 form a disordered region. A compositionally biased stretch (acidic residues) spans Gln-30–Ser-42.

The protein belongs to the frog skin active peptide (FSAP) family. Frenatin subfamily. As to expression, expressed by the granular skin glands.

The protein resides in the secreted. Functionally, antimicrobial peptide with activity against both Gram-positive and Gram-negative bacteria. Antibacterial activities have been tested against Bacillus cereus (MIC=12.5 ug/ml), Escherichia coli (MIC=50 ug/ml), Leuconostoc mesenteroides (MIC=25 ug/ml), Micrococcus luteus (MIC=1.5 ug/ml), Pastewella haemolytica (MIC=0.8 ug/ml), Staphylococcus aureus (MIC&lt;l00 ug/ml), Streptococcus faecalis (MIC&lt;150 ug/ml) and Streptococcus uberis (MIC=50 ug/ml). Strongly inhibits the formation of NO by neuronal nitric oxide synthase (nNOS) at micromolar concentrations. Acts by a non-competitive mechanism, probably by binding to calcium/calmodulin and as a consequence blocking calmodulin attachment to nNOS. The polypeptide is Frenatin-3 (Nyctimystes infrafrenatus (White-lipped tree frog)).